Reading from the N-terminus, the 199-residue chain is dITP/XTP pyrophosphatase (199 aa).

7-12 provides a ligand contact to substrate; that stretch reads SNNRGK. Mg(2+) contacts are provided by aspartate 39 and aspartate 68. The active-site Proton acceptor is the aspartate 68. Substrate-binding positions include alanine 69, 154–157, lysine 177, and 182–183; these read FGFD and HR.

It belongs to the HAM1 NTPase family. As to quaternary structure, homodimer. Mg(2+) serves as cofactor.

It carries out the reaction XTP + H2O = XMP + diphosphate + H(+). It catalyses the reaction dITP + H2O = dIMP + diphosphate + H(+). The enzyme catalyses ITP + H2O = IMP + diphosphate + H(+). Pyrophosphatase that catalyzes the hydrolysis of nucleoside triphosphates to their monophosphate derivatives, with a high preference for the non-canonical purine nucleotides XTP (xanthosine triphosphate), dITP (deoxyinosine triphosphate) and ITP. Seems to function as a house-cleaning enzyme that removes non-canonical purine nucleotides from the nucleotide pool, thus preventing their incorporation into DNA/RNA and avoiding chromosomal lesions. The sequence is that of dITP/XTP pyrophosphatase from Paracidovorax citrulli (strain AAC00-1) (Acidovorax citrulli).